Consider the following 474-residue polypeptide: tRNA-2-methylthio-N(6)-dimethylallyladenosine synthase (474 aa).

One can recognise an MTTase N-terminal domain in the interval 3-120 (KKLHIKTWGC…LPDMIEQVRR (118 aa)). Positions 12, 49, 83, 157, 161, and 164 each coordinate [4Fe-4S] cluster. The 233-residue stretch at 143–375 (RAEGPTAFVS…QDRITQQAMR (233 aa)) folds into the Radical SAM core domain. In terms of domain architecture, TRAM spans 378-441 (RHMMGTVQRI…TNSLRGKFIR (64 aa)).

Belongs to the methylthiotransferase family. MiaB subfamily. Monomer. [4Fe-4S] cluster is required as a cofactor.

The protein resides in the cytoplasm. It catalyses the reaction N(6)-dimethylallyladenosine(37) in tRNA + (sulfur carrier)-SH + AH2 + 2 S-adenosyl-L-methionine = 2-methylsulfanyl-N(6)-dimethylallyladenosine(37) in tRNA + (sulfur carrier)-H + 5'-deoxyadenosine + L-methionine + A + S-adenosyl-L-homocysteine + 2 H(+). Its function is as follows. Catalyzes the methylthiolation of N6-(dimethylallyl)adenosine (i(6)A), leading to the formation of 2-methylthio-N6-(dimethylallyl)adenosine (ms(2)i(6)A) at position 37 in tRNAs that read codons beginning with uridine. This is tRNA-2-methylthio-N(6)-dimethylallyladenosine synthase from Shewanella sp. (strain W3-18-1).